The chain runs to 66 residues: Beta-defensin 107A (66 aa).

Residues 1–22 form the signal peptide; the sequence is MKIFFFIFAALILLAQIFQART. 2 disulfide bridges follow: Cys-37-Cys-51 and Cys-41-Cys-60.

It belongs to the beta-defensin family.

It localises to the secreted. Has antibacterial activity. The polypeptide is Beta-defensin 107A (DEFB107A) (Hylobates lar (Lar gibbon)).